Here is a 184-residue protein sequence, read N- to C-terminus: ATP synthase subunit b, chloroplastic (184 aa).

A helical transmembrane segment spans residues 27–49 (LATNPINLSVVLGVLIFFGKGVL).

Belongs to the ATPase B chain family. F-type ATPases have 2 components, F(1) - the catalytic core - and F(0) - the membrane proton channel. F(1) has five subunits: alpha(3), beta(3), gamma(1), delta(1), epsilon(1). F(0) has four main subunits: a(1), b(1), b'(1) and c(10-14). The alpha and beta chains form an alternating ring which encloses part of the gamma chain. F(1) is attached to F(0) by a central stalk formed by the gamma and epsilon chains, while a peripheral stalk is formed by the delta, b and b' chains.

The protein resides in the plastid. It localises to the chloroplast thylakoid membrane. In terms of biological role, f(1)F(0) ATP synthase produces ATP from ADP in the presence of a proton or sodium gradient. F-type ATPases consist of two structural domains, F(1) containing the extramembraneous catalytic core and F(0) containing the membrane proton channel, linked together by a central stalk and a peripheral stalk. During catalysis, ATP synthesis in the catalytic domain of F(1) is coupled via a rotary mechanism of the central stalk subunits to proton translocation. Its function is as follows. Component of the F(0) channel, it forms part of the peripheral stalk, linking F(1) to F(0). The protein is ATP synthase subunit b, chloroplastic of Gossypium barbadense (Sea Island cotton).